A 325-amino-acid polypeptide reads, in one-letter code: MSYRTWLAVCILLILSMVSIGGFTRLTESGLSITEWKPVTGVIPPLSKNAWQKEFDKYKNTPEYKVRHFSISYAEFQFIYLVEYFHRLVGRILGLVFFIGLVYFFVVGNLARESRLRLCFALVLGVIQGFVGWYMVKSGLLDVPAVSHYRLALHLFCASLLFMVLVYEFLSPTVIKGSVFKWHLVGCSLMFLLSMQIILGGLVAGLKAGLICSTFPLMNGEFFPAEIFHELSLNCFNDPVAVQFLHRMSAFLLTFICLVCLVISFFYDRAFRARVFLVASMMLLQMFFGVLTLLFHIPIDIALLHQIMAFILLGICVSFLRVRSG.

Transmembrane regions (helical) follow at residues 6-26, 88-108, 116-136, 155-175, and 184-204; these read WLAV…FTRL, LVGR…FVVG, LRLC…WYMV, LFCA…PTVI, and LVGC…GLVA. Heme is bound at residue H246. 3 consecutive transmembrane segments (helical) span residues 248–268, 275–295, and 297–317; these read MSAF…FFYD, VFLV…TLLF, and IPID…GICV. H305 lines the heme pocket.

This sequence belongs to the COX15/CtaA family. Type 2 subfamily. As to quaternary structure, interacts with CtaB. The cofactor is heme b.

The protein resides in the cell membrane. It carries out the reaction Fe(II)-heme o + 2 A + H2O = Fe(II)-heme a + 2 AH2. The protein operates within porphyrin-containing compound metabolism; heme A biosynthesis; heme A from heme O: step 1/1. In terms of biological role, catalyzes the conversion of heme O to heme A by two successive hydroxylations of the methyl group at C8. The first hydroxylation forms heme I, the second hydroxylation results in an unstable dihydroxymethyl group, which spontaneously dehydrates, resulting in the formyl group of heme A. The protein is Heme A synthase of Neorickettsia sennetsu (strain ATCC VR-367 / Miyayama) (Ehrlichia sennetsu).